We begin with the raw amino-acid sequence, 401 residues long: Phosphoglycerate kinase (401 aa).

Residues 23-25 (DLN), arginine 38, 61-64 (HFGR), arginine 120, and arginine 153 each bind substrate. ATP is bound by residues lysine 203, glutamate 325, and 355–358 (GGDT).

It belongs to the phosphoglycerate kinase family. As to quaternary structure, monomer.

It is found in the cytoplasm. It catalyses the reaction (2R)-3-phosphoglycerate + ATP = (2R)-3-phospho-glyceroyl phosphate + ADP. It functions in the pathway carbohydrate degradation; glycolysis; pyruvate from D-glyceraldehyde 3-phosphate: step 2/5. In Rhizobium johnstonii (strain DSM 114642 / LMG 32736 / 3841) (Rhizobium leguminosarum bv. viciae), this protein is Phosphoglycerate kinase.